The sequence spans 520 residues: Amine oxidase [flavin-containing] B (520 aa).

Residues 1–489 (MNSKCDVVVV…TFLERHLPSV (489 aa)) lie on the Cytoplasmic side of the membrane. The residue at position 52 (K52) is an N6-acetyllysine. An S-8alpha-FAD cysteine modification is found at C397. A helical; Anchor for type IV membrane protein membrane pass occupies residues 490 to 516 (PGLLRLIRLTTVVSAVALGFLAQKRGL). Residues 517–520 (LLRI) are Mitochondrial intermembrane-facing.

It belongs to the flavin monoamine oxidase family. As to quaternary structure, monomer, homo- or heterodimer (containing two subunits of similar size). Each subunit contains a covalently bound flavin. Enzymatically active as monomer. The cofactor is FAD.

It localises to the mitochondrion outer membrane. It carries out the reaction a secondary aliphatic amine + O2 + H2O = a primary amine + an aldehyde + H2O2. The enzyme catalyses (R)-adrenaline + O2 + H2O = (R)-3,4-dihydroxymandelaldehyde + methylamine + H2O2. The catalysed reaction is a primary methyl amine + O2 + H2O = an aldehyde + H2O2 + NH4(+). It catalyses the reaction benzylamine + O2 + H2O = benzaldehyde + H2O2 + NH4(+). It carries out the reaction dopamine + O2 + H2O = 3,4-dihydroxyphenylacetaldehyde + H2O2 + NH4(+). The enzyme catalyses tyramine + O2 + H2O = (4-hydroxyphenyl)acetaldehyde + H2O2 + NH4(+). The catalysed reaction is (R)-noradrenaline + O2 + H2O = (R)-3,4-dihydroxymandelaldehyde + H2O2 + NH4(+). It catalyses the reaction 2-phenylethylamine + O2 + H2O = 2-phenylacetaldehyde + H2O2 + NH4(+). It carries out the reaction N-acetylputrescine + O2 + H2O = 4-acetamidobutanal + H2O2 + NH4(+). Functionally, catalyzes the oxidative deamination of primary and some secondary amines such as neurotransmitters, and exogenous amines including the tertiary amine, neurotoxin 1-methyl-4-phenyl-1,2,3,6-tetrahydropyridine (MPTP), with concomitant reduction of oxygen to hydrogen peroxide and participates in the metabolism of neuroactive and vasoactive amines in the central nervous system and peripheral tissues. Preferentially degrades benzylamine and phenylethylamine. The polypeptide is Amine oxidase [flavin-containing] B (Cavia porcellus (Guinea pig)).